Consider the following 445-residue polypeptide: C4-dicarboxylate transport protein (445 aa).

Transmembrane regions (helical) follow at residues 24-44 (VLYV…WLSP), 62-82 (LIKM…IAHI), 105-125 (FALV…GLAA), 163-183 (GDIL…MALG), 201-221 (FGVI…AMAF), 234-254 (LIGL…LVLG), 322-342 (IYMT…LSFG), and 370-390 (AGTL…VFSI).

It belongs to the dicarboxylate/amino acid:cation symporter (DAACS) (TC 2.A.23) family.

It is found in the cell inner membrane. In terms of biological role, responsible for the transport of dicarboxylates such as succinate, fumarate, and malate from the periplasm across the membrane. The protein is C4-dicarboxylate transport protein of Rhodopseudomonas palustris (strain ATCC BAA-98 / CGA009).